Consider the following 794-residue polypeptide: cAMP and cAMP-inhibited cGMP 3',5'-cyclic phosphodiesterase 10A (794 aa).

Residues arginine 296 to cysteine 297, isoleucine 340 to alanine 341, threonine 374, glutamine 393, and histidine 525 contribute to the 3',5'-cyclic AMP site. The 318-residue stretch at threonine 452 to glutamate 769 folds into the PDEase domain. Histidine 525 functions as the Proton donor in the catalytic mechanism. Histidine 525 provides a ligand contact to 3',5'-cyclic GMP. A divalent metal cation contacts are provided by histidine 529, histidine 563, aspartate 564, and aspartate 674. Glutamine 726 lines the 3',5'-cyclic AMP pocket. Glutamine 726 provides a ligand contact to 3',5'-cyclic GMP.

Belongs to the cyclic nucleotide phosphodiesterase family. Homodimer. It depends on a divalent metal cation as a cofactor. Detected in striatum and testis (at protein level). Detected in whole brain, hippocampus, olfactory bulb, striatum neurons and testis.

The protein resides in the cytoplasm. It localises to the cytosol. It catalyses the reaction a nucleoside 3',5'-cyclic phosphate + H2O = a nucleoside 5'-phosphate + H(+). The catalysed reaction is 3',5'-cyclic AMP + H2O = AMP + H(+). The enzyme catalyses 3',5'-cyclic GMP + H2O = GMP + H(+). It participates in purine metabolism; 3',5'-cyclic AMP degradation; AMP from 3',5'-cyclic AMP: step 1/1. The protein operates within purine metabolism; 3',5'-cyclic GMP degradation; GMP from 3',5'-cyclic GMP: step 1/1. Inhibited by dipyridamole and moderately by IBMX, zaprinast and rolipram. Plays a role in signal transduction by regulating the intracellular concentration of cyclic nucleotides. Can hydrolyze both cAMP and cGMP, but has higher affinity for cAMP and is more efficient with cAMP as substrate. The sequence is that of cAMP and cAMP-inhibited cGMP 3',5'-cyclic phosphodiesterase 10A (Pde10a) from Rattus norvegicus (Rat).